The chain runs to 466 residues: Proline--tRNA ligase (466 aa).

Belongs to the class-II aminoacyl-tRNA synthetase family. ProS type 3 subfamily. As to quaternary structure, homodimer.

The protein localises to the cytoplasm. The catalysed reaction is tRNA(Pro) + L-proline + ATP = L-prolyl-tRNA(Pro) + AMP + diphosphate. Its function is as follows. Catalyzes the attachment of proline to tRNA(Pro) in a two-step reaction: proline is first activated by ATP to form Pro-AMP and then transferred to the acceptor end of tRNA(Pro). The protein is Proline--tRNA ligase of Picrophilus torridus (strain ATCC 700027 / DSM 9790 / JCM 10055 / NBRC 100828 / KAW 2/3).